Here is a 489-residue protein sequence, read N- to C-terminus: Inositol-pentakisphosphate 2-kinase (489 aa).

Positions 136 to 140 (EIKPK) match the EXKPK motif motif.

The protein belongs to the IPK1 type 2 family. In terms of tissue distribution, in brain, it is expressed throughout the hippocampus (CA1, CA2, CA3 and dentate gyrus), inner layers of the cerebral cortex, and Purkinje cells of the cerebellum. In heart, it is expressed in cardiomyocytes but not in interstitial cells, blood vessels, or valves. Also expressed in testis.

The protein localises to the cytoplasm. It is found in the nucleus. The catalysed reaction is 1D-myo-inositol 1,3,4,5,6-pentakisphosphate + ATP = 1D-myo-inositol hexakisphosphate + ADP + H(+). Phosphorylates Ins(1,3,4,5,6)P5 at position 2 to form Ins(1,2,3,4,5,6)P6 (InsP6 or phytate). InsP6 is involved in many processes such as mRNA export, non-homologous end-joining, endocytosis, ion channel regulation. It also protects cells from TNF-alpha-induced apoptosis. The sequence is that of Inositol-pentakisphosphate 2-kinase (Ippk) from Mus musculus (Mouse).